The following is a 393-amino-acid chain: Negative regulator of ofd1 (393 aa).

The interval 1–51 (MIGRRPQGLRAAASLKKQQQLEKQKQEASYELSGNSSPSKENGSENVDNGE) is disordered. The span at 19-28 (QQLEKQKQEA) shows a compositional bias: basic and acidic residues. Residues 32-47 (LSGNSSPSKENGSENV) show a composition bias toward polar residues.

The protein belongs to the ETT1 family. As to quaternary structure, interacts with ofd1.

It localises to the cytoplasm. The protein localises to the nucleus. In terms of biological role, required for correct translation termination. Positive regulator of the stability of the N-terminal transcription factor domain (Sre1N) of sre1 which is released from the membrane and enters the nucleus to activate hypoxic gene expression. Also acts as a direct inhibitor of ofd1. Functions probably by inhibiting the ability of the ofd1 to accelerate Sre1N degradation in absence of oxygen. This is Negative regulator of ofd1 (nro1) from Schizosaccharomyces pombe (strain 972 / ATCC 24843) (Fission yeast).